A 119-amino-acid polypeptide reads, in one-letter code: Ribonuclease P protein component (119 aa).

The protein belongs to the RnpA family. Consists of a catalytic RNA component (M1 or rnpB) and a protein subunit.

It catalyses the reaction Endonucleolytic cleavage of RNA, removing 5'-extranucleotides from tRNA precursor.. Its function is as follows. RNaseP catalyzes the removal of the 5'-leader sequence from pre-tRNA to produce the mature 5'-terminus. It can also cleave other RNA substrates such as 4.5S RNA. The protein component plays an auxiliary but essential role in vivo by binding to the 5'-leader sequence and broadening the substrate specificity of the ribozyme. This Salmonella schwarzengrund (strain CVM19633) protein is Ribonuclease P protein component.